The primary structure comprises 1257 residues: Probable aldehyde oxidase gad-3 (1257 aa).

The region spanning 4–91 (TGIFFNVNGK…KTFVITVEGV (88 aa)) is the 2Fe-2S ferredoxin-type domain. [2Fe-2S] cluster-binding residues include Cys-43, Cys-48, Cys-51, and Cys-73. Residues 229–459 (LKGDRIELLL…TSLEVHIDAL (231 aa)) enclose the FAD-binding PCMH-type domain. Residue Glu-1208 is the Proton acceptor of the active site.

This sequence belongs to the xanthine dehydrogenase family. The cofactor is [2Fe-2S] cluster. FAD is required as a cofactor. It depends on Mo-molybdopterin as a cofactor.

It carries out the reaction an aldehyde + O2 + H2O = a carboxylate + H2O2 + H(+). May be involved in the metabolism of 1-methylnicotinamide (MNA). Linked to regulation of longevity through generation of reactive oxygen species, where it probably functions in a pathway downstream of the sirtuin sir-2.1 and the nicotinamide N-methyltransferase anmt-1. The protein is Probable aldehyde oxidase gad-3 of Caenorhabditis elegans.